The sequence spans 283 residues: Polyamine aminopropyltransferase (283 aa).

The region spanning 5-238 (STWIDEYHKG…GIWSWTFASE (234 aa)) is the PABS domain. Position 32 (Gln-32) interacts with S-methyl-5'-thioadenosine. His-63 and Asp-87 together coordinate spermidine. S-methyl-5'-thioadenosine is bound by residues Glu-107 and 139–140 (DG). Catalysis depends on Asp-158, which acts as the Proton acceptor. Spermidine is bound at residue 158–161 (DCSD).

The protein belongs to the spermidine/spermine synthase family. In terms of assembly, homodimer or homotetramer.

The protein localises to the cytoplasm. The enzyme catalyses S-adenosyl 3-(methylsulfanyl)propylamine + putrescine = S-methyl-5'-thioadenosine + spermidine + H(+). It participates in amine and polyamine biosynthesis; spermidine biosynthesis; spermidine from putrescine: step 1/1. Functionally, catalyzes the irreversible transfer of a propylamine group from the amino donor S-adenosylmethioninamine (decarboxy-AdoMet) to putrescine (1,4-diaminobutane) to yield spermidine. The protein is Polyamine aminopropyltransferase of Prochlorococcus marinus (strain MIT 9312).